A 198-amino-acid chain; its full sequence is MPPPTASTPDDSADPGPDFADVPPTDLVKVGFIFRPHGLDGELKIDPSATDDPARFEVLPTVFVGPHPRRVVRHDIASVRYQKTKRGITVILGLDGIVDRDDAEAVAKMDVFATEAALGLEDDELFADDLVGWTVVTEEGAVQGTVADFMEMPAQDLFVVRTPEDTEAMIPAIDDFIIEIDEEAERIVVRPIDGLMDA.

The tract at residues Met-1–Asp-21 is disordered. The region spanning Asp-122–Leu-195 is the PRC barrel domain.

Belongs to the RimM family. Binds ribosomal protein uS19.

The protein resides in the cytoplasm. Its function is as follows. An accessory protein needed during the final step in the assembly of 30S ribosomal subunit, possibly for assembly of the head region. Essential for efficient processing of 16S rRNA. May be needed both before and after RbfA during the maturation of 16S rRNA. It has affinity for free ribosomal 30S subunits but not for 70S ribosomes. The chain is Ribosome maturation factor RimM from Salinibacter ruber (strain DSM 13855 / M31).